The sequence spans 251 residues: Ribonuclease PH (251 aa).

Phosphate is bound by residues Arg-90 and 128–130; that span reads GTR.

It belongs to the RNase PH family. Homohexameric ring arranged as a trimer of dimers.

The enzyme catalyses tRNA(n+1) + phosphate = tRNA(n) + a ribonucleoside 5'-diphosphate. In terms of biological role, phosphorolytic 3'-5' exoribonuclease that plays an important role in tRNA 3'-end maturation. Removes nucleotide residues following the 3'-CCA terminus of tRNAs; can also add nucleotides to the ends of RNA molecules by using nucleoside diphosphates as substrates, but this may not be physiologically important. Probably plays a role in initiation of 16S rRNA degradation (leading to ribosome degradation) during starvation. This Leifsonia xyli subsp. xyli (strain CTCB07) protein is Ribonuclease PH.